A 252-amino-acid polypeptide reads, in one-letter code: Phosphate import ATP-binding protein PstB (252 aa).

The 242-residue stretch at Ile-6 to Ile-247 folds into the ABC transporter domain. An ATP-binding site is contributed by Gly-38–Ser-45.

This sequence belongs to the ABC transporter superfamily. Phosphate importer (TC 3.A.1.7) family. As to quaternary structure, the complex is composed of two ATP-binding proteins (PstB), two transmembrane proteins (PstC and PstA) and a solute-binding protein (PstS).

Its subcellular location is the cell inner membrane. The enzyme catalyses phosphate(out) + ATP + H2O = ADP + 2 phosphate(in) + H(+). In terms of biological role, part of the ABC transporter complex PstSACB involved in phosphate import. Responsible for energy coupling to the transport system. The sequence is that of Phosphate import ATP-binding protein PstB from Bacteroides thetaiotaomicron (strain ATCC 29148 / DSM 2079 / JCM 5827 / CCUG 10774 / NCTC 10582 / VPI-5482 / E50).